The following is a 74-amino-acid chain: Consomatin Ma1 (74 aa).

A signal peptide spans 1–22 (MQTAYWVMVMMMVWITAPLSEG). Residues 23 to 57 (GKLNGEIRGLVSHILIPQHTLRSLTSRDRSDNGGS) constitute a propeptide that is removed on maturation. Cys-63 and Cys-68 form a disulfide bridge. Trp-65 bears the D-tryptophan mark. 4-hydroxyproline occurs at positions 69, 70, and 72.

It belongs to the conotoxin C superfamily. Consomatin family. In terms of tissue distribution, expressed by the venom duct.

The protein localises to the secreted. Functionally, moderately activates human somatostatin receptors (SSTR) with a preferential activation of SSTR1 and SSTR4. In vivo, does not cause behavioral changes in mice within a few minutes of intracranial injection, but causes a progressive loss of movement thereafter. Four to five hours after injection, mice recover, even with the highest dose tested. Shows antinociception and antihyperalgesia activities in two mouse models of acute pain, most probably by acting outside the central nervous system. The polypeptide is Consomatin Ma1 (Conus magus (Magical cone)).